Here is a 747-residue protein sequence, read N- to C-terminus: AMP deaminase 1 (747 aa).

Position 81 is a phosphothreonine (Thr81). Position 85 is a phosphoserine (Ser85). Residue Tyr216 is modified to Phosphotyrosine. His303 and His305 together coordinate Zn(2+). Substrate contacts are provided by residues His305 and 374–379 (KFNDKY). Residue Ser441 is modified to Phosphoserine. His572 provides a ligand contact to Zn(2+). Glu575 contacts substrate. The active-site Proton acceptor is His594. Asp649 is a Zn(2+) binding site. 650 to 653 (DPMQ) serves as a coordination point for substrate.

Belongs to the metallo-dependent hydrolases superfamily. Adenosine and AMP deaminases family. As to quaternary structure, homotetramer. Zn(2+) serves as cofactor.

It carries out the reaction AMP + H2O + H(+) = IMP + NH4(+). The protein operates within purine metabolism; IMP biosynthesis via salvage pathway; IMP from AMP: step 1/1. AMP deaminase plays a critical role in energy metabolism. The sequence is that of AMP deaminase 1 from Homo sapiens (Human).